A 73-amino-acid polypeptide reads, in one-letter code: Pelophylaxin-1 (73 aa).

An N-terminal signal peptide occupies residues 1–22 (MFTMKKSLLLVFFLGTIALSLC). Positions 23 to 41 (EEERGADDDNGGEITDEEI) are excised as a propeptide. Cys-67 and Cys-73 are oxidised to a cystine.

In terms of tissue distribution, expressed by the skin glands.

The protein localises to the secreted. In terms of biological role, antimicrobial peptide. The chain is Pelophylaxin-1 from Pelophylax fukienensis (Fukien gold-striped pond frog).